The following is a 154-amino-acid chain: Lipoprotein signal peptidase (154 aa).

A run of 2 helical transmembrane segments spans residues Gly-55–Met-75 and Leu-84–Val-104. Catalysis depends on residues Asp-111 and Asp-129. A helical transmembrane segment spans residues Ile-124–Phe-144.

It belongs to the peptidase A8 family.

The protein localises to the cell membrane. It carries out the reaction Release of signal peptides from bacterial membrane prolipoproteins. Hydrolyzes -Xaa-Yaa-Zaa-|-(S,diacylglyceryl)Cys-, in which Xaa is hydrophobic (preferably Leu), and Yaa (Ala or Ser) and Zaa (Gly or Ala) have small, neutral side chains.. It functions in the pathway protein modification; lipoprotein biosynthesis (signal peptide cleavage). Its function is as follows. This protein specifically catalyzes the removal of signal peptides from prolipoproteins. The protein is Lipoprotein signal peptidase of Listeria monocytogenes serovar 1/2a (strain ATCC BAA-679 / EGD-e).